The chain runs to 343 residues: Anthranilate phosphoribosyltransferase (343 aa).

5-phospho-alpha-D-ribose 1-diphosphate contacts are provided by residues G84, 87 to 88, T92, 94 to 97, 112 to 120, and S124; these read GD, NIST, and KHGNRSASS. G84 is an anthranilate binding site. Mg(2+) is bound at residue S96. Position 115 (N115) interacts with anthranilate. R170 contacts anthranilate. Mg(2+)-binding residues include D229 and E230.

This sequence belongs to the anthranilate phosphoribosyltransferase family. As to quaternary structure, homodimer. Requires Mg(2+) as cofactor.

The enzyme catalyses N-(5-phospho-beta-D-ribosyl)anthranilate + diphosphate = 5-phospho-alpha-D-ribose 1-diphosphate + anthranilate. It functions in the pathway amino-acid biosynthesis; L-tryptophan biosynthesis; L-tryptophan from chorismate: step 2/5. Its function is as follows. Catalyzes the transfer of the phosphoribosyl group of 5-phosphorylribose-1-pyrophosphate (PRPP) to anthranilate to yield N-(5'-phosphoribosyl)-anthranilate (PRA). The protein is Anthranilate phosphoribosyltransferase of Bordetella pertussis (strain Tohama I / ATCC BAA-589 / NCTC 13251).